The sequence spans 501 residues: Zinc finger protein PLAG1 (501 aa).

The interval 1 to 30 (MATVIPGDLSEVRDTQKVPSGKRKRGETKP) is disordered. Residues 22-25 (KRKR) carry the Nuclear localization signal motif. 7 consecutive C2H2-type zinc fingers follow at residues 34–56 (FPCQ…SYSH), 62–86 (YKCT…MATH), 92–114 (HKCN…LHTH), 121–143 (FKCE…LALH), 150–172 (LTCK…LKTH), 185–207 (HQCE…MVVH), and 213–236 (FLCQ…KKSH). Composition is skewed to low complexity over residues 366–380 (SGMP…ASSS) and 455–467 (TQLP…PQDP). Disordered regions lie at residues 366–406 (SGMP…GSVP) and 447–474 (QEEA…IGLG).

This sequence belongs to the krueppel C2H2-type zinc-finger protein family. Expressed in nephroblastoma.

Its subcellular location is the nucleus. In terms of biological role, transcription factor and proto-oncogene whose activation results in up-regulation of target genes, such as IGFII, leading to uncontrolled cell proliferation. In Gallus gallus (Chicken), this protein is Zinc finger protein PLAG1 (PLAG1).